The sequence spans 400 residues: Argininosuccinate synthase (400 aa).

ATP-binding positions include 6-14 and Ala-33; that span reads AYSGGLDTS. The L-citrulline site is built by Tyr-84 and Ser-89. ATP is bound at residue Gly-114. 3 residues coordinate L-aspartate: Thr-116, Asn-120, and Asp-121. Asn-120 is an L-citrulline binding site. L-citrulline contacts are provided by Arg-124, Ser-173, Ser-182, Glu-258, and Tyr-270.

This sequence belongs to the argininosuccinate synthase family. Type 1 subfamily. As to quaternary structure, homotetramer.

It is found in the cytoplasm. It catalyses the reaction L-citrulline + L-aspartate + ATP = 2-(N(omega)-L-arginino)succinate + AMP + diphosphate + H(+). It functions in the pathway amino-acid biosynthesis; L-arginine biosynthesis; L-arginine from L-ornithine and carbamoyl phosphate: step 2/3. The chain is Argininosuccinate synthase from Thermus thermophilus (strain ATCC BAA-163 / DSM 7039 / HB27).